A 233-amino-acid chain; its full sequence is UPF0725 protein At4g17990 (233 aa).

It belongs to the UPF0725 (EMB2204) family.

The polypeptide is UPF0725 protein At4g17990 (Arabidopsis thaliana (Mouse-ear cress)).